We begin with the raw amino-acid sequence, 786 residues long: Rho GTPase-activating protein 10 (786 aa).

A BAR domain is found at 7 to 262 (EFSDCYLDSP…IRQNPKDHKR (256 aa)). The 108-residue stretch at 265–372 (QFTAEGYLYV…WLEALGGKEA (108 aa)) folds into the PH domain. One can recognise a Rho-GAP domain in the interval 389–574 (AQLDKMGFTI…ILIENHEKIF (186 aa)). Disordered stretches follow at residues 576–608 (TPPD…QRTK) and 621–727 (EDGD…PPES). Basic residues predominate over residues 599-608 (QSKRQGQRTK). The span at 634–651 (PTSSLDSLSSPSPVTTAV) shows a compositional bias: low complexity. Residues 676 to 688 (IPGQTRSSMVQWL) show a composition bias toward polar residues. Low complexity predominate over residues 689 to 712 (NPQSPTTTSSNSAVTPLSPGSSPF). The region spanning 728-786 (IRSRKARAVYPCEAEHSSELSFEIGAIFEDVQTSREPGWLEGTLNGKRGLIPQNYVKLL) is the SH3 domain.

In terms of assembly, interacts with PKN3. Interacts with caspase-activated PAK2 proteolytic fragment PAK-2p34; the interaction does not affect GRAF2/ARHGAP10 GTPase activation activity towards RHOA and CDC42. Interacts via its SH3 domain with PTK2/FAK1. Interacts with PTK2B/PYK2; the interaction negatively regulates GRAF2/ARHGAP10 GTPase-activating activity. Interacts with MICAL1 and WDR44; complex formation might transit from GRAF2/ARHGAP10-MICAL1 to GRAF2/ARHGAP10-WDR44 complexes. Phosphorylated. Phosphorylated in vitro by constitutive active PKN3. High levels of expression in heart and skeletal muscle.

It is found in the cytoplasm. The protein resides in the perinuclear region. It localises to the cell membrane. The protein localises to the endosome membrane. GTPase-activating protein that catalyzes the conversion of active GTP-bound Rho GTPases to their inactive GDP-bound form, thus suppressing various Rho GTPase-mediated cellular processes. Also converts Cdc42 to an inactive GDP-bound state. Essential for PTKB2 regulation of cytoskeletal organization via Rho family GTPases. Inhibits PAK2 proteolytic fragment PAK-2p34 kinase activity and changes its localization from the nucleus to the perinuclear region. Stabilizes PAK-2p34 thereby increasing stimulation of cell death. Associates with MICAL1 on the endosomal membrane to promote Rab8-Rab10-dependent tubule extension. After dissociation with MICAL1, recruits WDR44 which connects the endoplasmic reticulum (ER) with the endosomal tubule, thereby participating in the export of a subset of neosynthesized proteins. This is Rho GTPase-activating protein 10 (ARHGAP10) from Homo sapiens (Human).